A 140-amino-acid chain; its full sequence is 3-hydroxyacyl-[acyl-carrier-protein] dehydratase FabZ (140 aa).

Residue His48 is part of the active site.

Belongs to the thioester dehydratase family. FabZ subfamily.

It is found in the cytoplasm. It carries out the reaction a (3R)-hydroxyacyl-[ACP] = a (2E)-enoyl-[ACP] + H2O. Its function is as follows. Involved in unsaturated fatty acids biosynthesis. Catalyzes the dehydration of short chain beta-hydroxyacyl-ACPs and long chain saturated and unsaturated beta-hydroxyacyl-ACPs. In Halalkalibacterium halodurans (strain ATCC BAA-125 / DSM 18197 / FERM 7344 / JCM 9153 / C-125) (Bacillus halodurans), this protein is 3-hydroxyacyl-[acyl-carrier-protein] dehydratase FabZ.